The primary structure comprises 87 residues: HssA/B-like protein 57 (87 aa).

It belongs to the hssA/B family.

The polypeptide is HssA/B-like protein 57 (hssl57) (Dictyostelium discoideum (Social amoeba)).